We begin with the raw amino-acid sequence, 220 residues long: MKIDILDKGFVELVDVMGNDLSAVRAARVSFDMGLKDEERDRHLIEYLMKHGHETPFEHIVFTFHVKAPIFVARQWFRHRIASYNELSGRYSKLSYEFYIPSPERLEGYKTTIPPERVTEKISEIVDKAYRTYLELIESGVPREVARIVLPLNLYTRFFWTVNARSLMNFLNLRADSHAQWEIQQYALAIARIFKEKCPWTFEAFLKYAYKGDILKEVQV.

The ThyX domain maps to 1–208 (MKIDILDKGF…PWTFEAFLKY (208 aa)). Residues threonine 55, 78 to 81 (RHRI), and glutamate 86 each bind FAD. DUMP is bound by residues 75-78 (QWFR), 86-90 (ELSGR), and arginine 147. Residues 78–88 (RHRIASYNELS) carry the ThyX motif motif. Residues 163-165 (NAR) and asparagine 169 contribute to the FAD site. Arginine 174 contacts dUMP. The active-site Involved in ionization of N3 of dUMP, leading to its activation is the arginine 174.

It belongs to the thymidylate synthase ThyX family. In terms of assembly, homotetramer. Requires FAD as cofactor.

It carries out the reaction dUMP + (6R)-5,10-methylene-5,6,7,8-tetrahydrofolate + NADPH + H(+) = dTMP + (6S)-5,6,7,8-tetrahydrofolate + NADP(+). The enzyme catalyses dUMP + formaldehyde + NADPH + H(+) = dTMP + NADP(+) + H2O. It functions in the pathway pyrimidine metabolism; dTTP biosynthesis. Its function is as follows. Catalyzes the reductive methylation of 2'-deoxyuridine-5'-monophosphate (dUMP or deoxyuridylate) to 2'-deoxythymidine-5'-monophosphate (dTMP or deoxythymidylate) while utilizing 5,10-methylenetetrahydrofolate (mTHF) as the methylene donor, and NAD(P)H and FADH(2) as the reductant. This reaction is a critical step in DNA biosynthesis. Can also use formaldehyde instead of mTHF as a direct methylene donor for dTMP synthesis. However, the tighter binding of ThyX to mTHF (KD of 4 uM) compared to formaldehyde (KD of 20 mM) confirms that methylene tetrahydrofolate acts as the biological carbon donor for ThyX, serving as a formaldehyde carrier/transporter and thus avoiding genotoxic effects. The sequence is that of Flavin-dependent thymidylate synthase from Thermotoga maritima (strain ATCC 43589 / DSM 3109 / JCM 10099 / NBRC 100826 / MSB8).